Reading from the N-terminus, the 159-residue chain is Transcriptional repressor NrdR (159 aa).

Residues 1–11 (MQCPTCQNTDS) are compositionally biased toward polar residues. Positions 1-21 (MQCPTCQNTDSRVLESRSADS) are disordered. Residues 3 to 34 (CPTCQNTDSRVLESRSADSGKSVRRRRECLNC) fold into a zinc finger. The 91-residue stretch at 49 to 139 (VSVMKKDGSR…VYRKFNGVKD (91 aa)) folds into the ATP-cone domain.

This sequence belongs to the NrdR family. It depends on Zn(2+) as a cofactor.

Its function is as follows. Negatively regulates transcription of bacterial ribonucleotide reductase nrd genes and operons by binding to NrdR-boxes. The chain is Transcriptional repressor NrdR from Prochlorococcus marinus (strain MIT 9215).